Consider the following 196-residue polypeptide: Chromophore lyase CpcT/CpeT (196 aa).

It belongs to the CpcT/CpeT biliprotein lyase family.

Its function is as follows. Covalently attaches a chromophore to Cys residue(s) of phycobiliproteins. The polypeptide is Chromophore lyase CpcT/CpeT (Thermosynechococcus vestitus (strain NIES-2133 / IAM M-273 / BP-1)).